Consider the following 117-residue polypeptide: DNA-directed RNA polymerase subunit omega (117 aa).

Belongs to the RNA polymerase subunit omega family. As to quaternary structure, the RNAP catalytic core consists of 2 alpha, 1 beta, 1 beta' and 1 omega subunit. When a sigma factor is associated with the core the holoenzyme is formed, which can initiate transcription.

The catalysed reaction is RNA(n) + a ribonucleoside 5'-triphosphate = RNA(n+1) + diphosphate. Functionally, promotes RNA polymerase assembly. Latches the N- and C-terminal regions of the beta' subunit thereby facilitating its interaction with the beta and alpha subunits. This is DNA-directed RNA polymerase subunit omega from Cereibacter sphaeroides (strain ATCC 17025 / ATH 2.4.3) (Rhodobacter sphaeroides).